The chain runs to 249 residues: Phosphatidylglycerol--prolipoprotein diacylglyceryl transferase (249 aa).

7 helical membrane-spanning segments follow: residues 11 to 31, 49 to 69, 82 to 102, 116 to 136, 163 to 183, 192 to 212, and 223 to 243; these read LKIY…VILL, AIVG…IVDI, LGNG…VYLY, LVVP…FLAG, LHPT…FLLW, GRVF…VEFL, and LSTS…VFNI. Position 129 (R129) interacts with a 1,2-diacyl-sn-glycero-3-phospho-(1'-sn-glycerol).

This sequence belongs to the Lgt family.

The protein resides in the cell membrane. The enzyme catalyses L-cysteinyl-[prolipoprotein] + a 1,2-diacyl-sn-glycero-3-phospho-(1'-sn-glycerol) = an S-1,2-diacyl-sn-glyceryl-L-cysteinyl-[prolipoprotein] + sn-glycerol 1-phosphate + H(+). The protein operates within protein modification; lipoprotein biosynthesis (diacylglyceryl transfer). Functionally, catalyzes the transfer of the diacylglyceryl group from phosphatidylglycerol to the sulfhydryl group of the N-terminal cysteine of a prolipoprotein, the first step in the formation of mature lipoproteins. In Clostridium tetani (strain Massachusetts / E88), this protein is Phosphatidylglycerol--prolipoprotein diacylglyceryl transferase.